We begin with the raw amino-acid sequence, 279 residues long: Large ribosomal subunit protein uL2 (279 aa).

The interval 223 to 279 (TVRGSAMNPNDHPHGGGEGRSPVGMDAPRTPWGKRHMGVKTRNNKKSSTSMIVRRRK) is disordered. Basic residues predominate over residues 254–267 (WGKRHMGVKTRNNK).

This sequence belongs to the universal ribosomal protein uL2 family. Part of the 50S ribosomal subunit. Forms a bridge to the 30S subunit in the 70S ribosome.

One of the primary rRNA binding proteins. Required for association of the 30S and 50S subunits to form the 70S ribosome, for tRNA binding and peptide bond formation. It has been suggested to have peptidyltransferase activity; this is somewhat controversial. Makes several contacts with the 16S rRNA in the 70S ribosome. This Ureaplasma urealyticum serovar 10 (strain ATCC 33699 / Western) protein is Large ribosomal subunit protein uL2.